Consider the following 354-residue polypeptide: Dual-specificity RNA methyltransferase RlmN (354 aa).

Glutamate 89 acts as the Proton acceptor in catalysis. The Radical SAM core domain occupies 106–339 (KEAKYTVCVS…CTIRKSKGMD (234 aa)). Cysteine 113 and cysteine 344 form a disulfide bridge. [4Fe-4S] cluster contacts are provided by cysteine 120, cysteine 124, and cysteine 127. Residues 170-171 (GE), serine 202, 225-227 (SLH), and asparagine 301 each bind S-adenosyl-L-methionine. Residue cysteine 344 is the S-methylcysteine intermediate of the active site.

This sequence belongs to the radical SAM superfamily. RlmN family. It depends on [4Fe-4S] cluster as a cofactor.

The protein resides in the cytoplasm. It carries out the reaction adenosine(2503) in 23S rRNA + 2 reduced [2Fe-2S]-[ferredoxin] + 2 S-adenosyl-L-methionine = 2-methyladenosine(2503) in 23S rRNA + 5'-deoxyadenosine + L-methionine + 2 oxidized [2Fe-2S]-[ferredoxin] + S-adenosyl-L-homocysteine. It catalyses the reaction adenosine(37) in tRNA + 2 reduced [2Fe-2S]-[ferredoxin] + 2 S-adenosyl-L-methionine = 2-methyladenosine(37) in tRNA + 5'-deoxyadenosine + L-methionine + 2 oxidized [2Fe-2S]-[ferredoxin] + S-adenosyl-L-homocysteine. Its function is as follows. Specifically methylates position 2 of adenine 2503 in 23S rRNA and position 2 of adenine 37 in tRNAs. m2A2503 modification seems to play a crucial role in the proofreading step occurring at the peptidyl transferase center and thus would serve to optimize ribosomal fidelity. This is Dual-specificity RNA methyltransferase RlmN from Nautilia profundicola (strain ATCC BAA-1463 / DSM 18972 / AmH).